Reading from the N-terminus, the 296-residue chain is tRNA pseudouridine synthase B (296 aa).

The active-site Nucleophile is the aspartate 38.

It belongs to the pseudouridine synthase TruB family. Type 1 subfamily.

It catalyses the reaction uridine(55) in tRNA = pseudouridine(55) in tRNA. Responsible for synthesis of pseudouridine from uracil-55 in the psi GC loop of transfer RNAs. This chain is tRNA pseudouridine synthase B, found in Ehrlichia chaffeensis (strain ATCC CRL-10679 / Arkansas).